Consider the following 167-residue polypeptide: Probable chemoreceptor glutamine deamidase CheD (167 aa).

The protein belongs to the CheD family.

The catalysed reaction is L-glutaminyl-[protein] + H2O = L-glutamyl-[protein] + NH4(+). In terms of biological role, probably deamidates glutamine residues to glutamate on methyl-accepting chemotaxis receptors (MCPs), playing an important role in chemotaxis. The protein is Probable chemoreceptor glutamine deamidase CheD of Natronomonas pharaonis (strain ATCC 35678 / DSM 2160 / CIP 103997 / JCM 8858 / NBRC 14720 / NCIMB 2260 / Gabara) (Halobacterium pharaonis).